We begin with the raw amino-acid sequence, 86 residues long: MSVARNLWRVADAPHIVPADSVERQTAERLINACPAGLFSLTPEGNLRIDYRSCLECGTCRLLCDESTLQQWRYPPSGFGITYRFG.

The 30-residue stretch at 45–74 folds into the 4Fe-4S ferredoxin-type domain; that stretch reads GNLRIDYRSCLECGTCRLLCDESTLQQWRY.

Belongs to the bacterial-type ferredoxin family. FixX subfamily.

Could be a 3Fe-4S cluster-containing protein. Probably participates in a redox process with YgcN, YgcQ and YgcR. In Escherichia coli (strain K12), this protein is Ferredoxin-like protein YgcO (ygcO).